We begin with the raw amino-acid sequence, 201 residues long: Flagellin B1 (201 aa).

Residues Met-1–Gly-11 constitute a propeptide that is removed on maturation.

Belongs to the archaeal flagellin family.

It localises to the archaeal flagellum. Flagellin is the subunit protein which polymerizes to form the filaments of archaeal flagella. This Natrialba magadii (strain ATCC 43099 / DSM 3394 / CCM 3739 / CIP 104546 / IAM 13178 / JCM 8861 / NBRC 102185 / NCIMB 2190 / MS3) (Natronobacterium magadii) protein is Flagellin B1 (flaB1).